Consider the following 73-residue polypeptide: Crustacean hyperglycemic hormone (73 aa).

3 disulfides stabilise this stretch: Cys7–Cys43, Cys23–Cys39, and Cys26–Cys52. At Val73 the chain carries Valine amide.

It belongs to the arthropod CHH/MIH/GIH/VIH hormone family. In terms of tissue distribution, produced by the medulla terminalis X-organ in the eyestalks and transported to the sinus gland where they are stored and released.

The protein resides in the secreted. Its function is as follows. Hormone found in the sinus gland of isopods and decapods which controls the blood sugar level. Has a secretagogue action over the amylase released from the midgut gland. May act as a stress hormone and may be involved in the control of molting and reproduction. The sequence is that of Crustacean hyperglycemic hormone from Jasus lalandii (Cape rock lobster).